We begin with the raw amino-acid sequence, 287 residues long: Phosphatidylserine decarboxylase proenzyme (287 aa).

Catalysis depends on charge relay system; for autoendoproteolytic cleavage activity residues D90, H147, and S252. S252 acts as the Schiff-base intermediate with substrate; via pyruvic acid; for decarboxylase activity in catalysis. S252 carries the post-translational modification Pyruvic acid (Ser); by autocatalysis.

This sequence belongs to the phosphatidylserine decarboxylase family. PSD-B subfamily. Prokaryotic type I sub-subfamily. As to quaternary structure, heterodimer of a large membrane-associated beta subunit and a small pyruvoyl-containing alpha subunit. The cofactor is pyruvate. Is synthesized initially as an inactive proenzyme. Formation of the active enzyme involves a self-maturation process in which the active site pyruvoyl group is generated from an internal serine residue via an autocatalytic post-translational modification. Two non-identical subunits are generated from the proenzyme in this reaction, and the pyruvate is formed at the N-terminus of the alpha chain, which is derived from the carboxyl end of the proenzyme. The autoendoproteolytic cleavage occurs by a canonical serine protease mechanism, in which the side chain hydroxyl group of the serine supplies its oxygen atom to form the C-terminus of the beta chain, while the remainder of the serine residue undergoes an oxidative deamination to produce ammonia and the pyruvoyl prosthetic group on the alpha chain. During this reaction, the Ser that is part of the protease active site of the proenzyme becomes the pyruvoyl prosthetic group, which constitutes an essential element of the active site of the mature decarboxylase.

The protein localises to the cell membrane. It carries out the reaction a 1,2-diacyl-sn-glycero-3-phospho-L-serine + H(+) = a 1,2-diacyl-sn-glycero-3-phosphoethanolamine + CO2. Its pathway is phospholipid metabolism; phosphatidylethanolamine biosynthesis; phosphatidylethanolamine from CDP-diacylglycerol: step 2/2. Catalyzes the formation of phosphatidylethanolamine (PtdEtn) from phosphatidylserine (PtdSer). This is Phosphatidylserine decarboxylase proenzyme from Pseudomonas putida (strain ATCC 700007 / DSM 6899 / JCM 31910 / BCRC 17059 / LMG 24140 / F1).